The chain runs to 882 residues: Alanine--tRNA ligase (882 aa).

The Zn(2+) site is built by histidine 568, histidine 572, cysteine 670, and histidine 674.

The protein belongs to the class-II aminoacyl-tRNA synthetase family. It depends on Zn(2+) as a cofactor.

It localises to the cytoplasm. It catalyses the reaction tRNA(Ala) + L-alanine + ATP = L-alanyl-tRNA(Ala) + AMP + diphosphate. Its function is as follows. Catalyzes the attachment of alanine to tRNA(Ala) in a two-step reaction: alanine is first activated by ATP to form Ala-AMP and then transferred to the acceptor end of tRNA(Ala). Also edits incorrectly charged Ser-tRNA(Ala) and Gly-tRNA(Ala) via its editing domain. In Syntrophotalea carbinolica (strain DSM 2380 / NBRC 103641 / GraBd1) (Pelobacter carbinolicus), this protein is Alanine--tRNA ligase.